A 720-amino-acid chain; its full sequence is Phosphoribosylformylglycinamidine synthase subunit PurL (720 aa).

Residue His-47 is part of the active site. Tyr-50 and Lys-89 together coordinate ATP. Glu-91 is a Mg(2+) binding site. Substrate contacts are provided by residues 92-95 and Arg-114; that span reads SHNH. His-93 acts as the Proton acceptor in catalysis. Residue Asp-115 coordinates Mg(2+). Gln-238 is a binding site for substrate. Residue Asp-266 coordinates Mg(2+). 310-312 is a substrate binding site; it reads ESQ. ATP-binding residues include Asp-488 and Gly-525. Asn-526 serves as a coordination point for Mg(2+). Ser-528 is a binding site for substrate.

It belongs to the FGAMS family. In terms of assembly, monomer. Part of the FGAM synthase complex composed of 1 PurL, 1 PurQ and 2 PurS subunits.

It localises to the cytoplasm. The catalysed reaction is N(2)-formyl-N(1)-(5-phospho-beta-D-ribosyl)glycinamide + L-glutamine + ATP + H2O = 2-formamido-N(1)-(5-O-phospho-beta-D-ribosyl)acetamidine + L-glutamate + ADP + phosphate + H(+). It participates in purine metabolism; IMP biosynthesis via de novo pathway; 5-amino-1-(5-phospho-D-ribosyl)imidazole from N(2)-formyl-N(1)-(5-phospho-D-ribosyl)glycinamide: step 1/2. Functionally, part of the phosphoribosylformylglycinamidine synthase complex involved in the purines biosynthetic pathway. Catalyzes the ATP-dependent conversion of formylglycinamide ribonucleotide (FGAR) and glutamine to yield formylglycinamidine ribonucleotide (FGAM) and glutamate. The FGAM synthase complex is composed of three subunits. PurQ produces an ammonia molecule by converting glutamine to glutamate. PurL transfers the ammonia molecule to FGAR to form FGAM in an ATP-dependent manner. PurS interacts with PurQ and PurL and is thought to assist in the transfer of the ammonia molecule from PurQ to PurL. The polypeptide is Phosphoribosylformylglycinamidine synthase subunit PurL (Cereibacter sphaeroides (strain KD131 / KCTC 12085) (Rhodobacter sphaeroides)).